A 303-amino-acid chain; its full sequence is Elongation factor Ts (303 aa).

The involved in Mg(2+) ion dislocation from EF-Tu stretch occupies residues 80 to 83 (TDFV).

The protein belongs to the EF-Ts family.

The protein localises to the cytoplasm. Associates with the EF-Tu.GDP complex and induces the exchange of GDP to GTP. It remains bound to the aminoacyl-tRNA.EF-Tu.GTP complex up to the GTP hydrolysis stage on the ribosome. This chain is Elongation factor Ts, found in Clostridium perfringens (strain SM101 / Type A).